We begin with the raw amino-acid sequence, 385 residues long: 1-deoxy-D-xylulose 5-phosphate reductoisomerase (385 aa).

NADPH contacts are provided by threonine 10, glycine 11, serine 12, isoleucine 13, lysine 37, and asparagine 124. Lysine 125 contacts 1-deoxy-D-xylulose 5-phosphate. Glutamate 126 lines the NADPH pocket. Aspartate 150 contributes to the Mn(2+) binding site. Positions 151, 152, 176, and 199 each coordinate 1-deoxy-D-xylulose 5-phosphate. Position 152 (glutamate 152) interacts with Mn(2+). Glycine 205 is an NADPH binding site. 1-deoxy-D-xylulose 5-phosphate is bound by residues serine 212, asparagine 217, lysine 218, and glutamate 221. Glutamate 221 provides a ligand contact to Mn(2+).

Belongs to the DXR family. It depends on Mg(2+) as a cofactor. Requires Mn(2+) as cofactor.

The enzyme catalyses 2-C-methyl-D-erythritol 4-phosphate + NADP(+) = 1-deoxy-D-xylulose 5-phosphate + NADPH + H(+). It functions in the pathway isoprenoid biosynthesis; isopentenyl diphosphate biosynthesis via DXP pathway; isopentenyl diphosphate from 1-deoxy-D-xylulose 5-phosphate: step 1/6. Functionally, catalyzes the NADPH-dependent rearrangement and reduction of 1-deoxy-D-xylulose-5-phosphate (DXP) to 2-C-methyl-D-erythritol 4-phosphate (MEP). The protein is 1-deoxy-D-xylulose 5-phosphate reductoisomerase of Clostridium botulinum (strain Kyoto / Type A2).